Here is a 475-residue protein sequence, read N- to C-terminus: Ribulose bisphosphate carboxylase large chain (475 aa).

The propeptide occupies 1-2 (MS). The residue at position 3 (P3) is an N-acetylproline. K14 is modified (N6,N6,N6-trimethyllysine). 2 residues coordinate substrate: N123 and T173. Catalysis depends on K175, which acts as the Proton acceptor. K177 lines the substrate pocket. The Mg(2+) site is built by K201, D203, and E204. Position 201 is an N6-carboxylysine (K201). The Proton acceptor role is filled by H294. The substrate site is built by R295, H327, and S379.

It belongs to the RuBisCO large chain family. Type I subfamily. In terms of assembly, heterohexadecamer of 8 large chains and 8 small chains; disulfide-linked. The disulfide link is formed within the large subunit homodimers. The cofactor is Mg(2+). The disulfide bond which can form in the large chain dimeric partners within the hexadecamer appears to be associated with oxidative stress and protein turnover.

The protein resides in the plastid. Its subcellular location is the chloroplast. It catalyses the reaction 2 (2R)-3-phosphoglycerate + 2 H(+) = D-ribulose 1,5-bisphosphate + CO2 + H2O. The catalysed reaction is D-ribulose 1,5-bisphosphate + O2 = 2-phosphoglycolate + (2R)-3-phosphoglycerate + 2 H(+). RuBisCO catalyzes two reactions: the carboxylation of D-ribulose 1,5-bisphosphate, the primary event in carbon dioxide fixation, as well as the oxidative fragmentation of the pentose substrate in the photorespiration process. Both reactions occur simultaneously and in competition at the same active site. The chain is Ribulose bisphosphate carboxylase large chain from Chara vulgaris (Common stonewort).